The following is a 408-amino-acid chain: Aminoacylase-1 (408 aa).

H76 is a binding site for Zn(2+). D78 is an active-site residue. D109 lines the Zn(2+) pocket. The active-site Proton acceptor is the E143. The Zn(2+) site is built by E144, E172, and H379.

It belongs to the peptidase M20A family. Homodimer. The cofactor is Zn(2+).

The protein localises to the cytoplasm. The catalysed reaction is an N-acyl-L-amino acid + H2O = an L-alpha-amino acid + a carboxylate. It catalyses the reaction an N-acetyl-L-cysteine-S-conjugate + H2O = an S-substituted L-cysteine + acetate. Involved in the hydrolysis of N-acylated or N-acetylated amino acids (except L-aspartate). This Dictyostelium discoideum (Social amoeba) protein is Aminoacylase-1 (acy1).